Consider the following 116-residue polypeptide: Large ribosomal subunit protein bL17 (116 aa).

Belongs to the bacterial ribosomal protein bL17 family. As to quaternary structure, part of the 50S ribosomal subunit. Contacts protein L32.

The polypeptide is Large ribosomal subunit protein bL17 (Helicobacter pylori (strain P12)).